The primary structure comprises 260 residues: MDKNNQKKFVLVHGICHGAWCWYKVKAQLEAAGHSVTAVDLAASGVNMTSLDEIQTLKDYCKPLLEFLSSLGSDDDKVILVAHSMGGISASLAADIFPSKVAAIVFVAAFMPDISNPPAYVFQKLVKDVTQEVWMDTVFGKPDRPLEFALFGPEFMAKYLYNLSPLQDFELAKMSVRVSPFMTNNLAGTISFSEDRYGSVTRIYIVCGEDVAVPVDYQRGMINDFPVKEVLEIKDADHMPMFSKPQELCALLLEIADKYA.

Residue S84 is the Acyl-ester intermediate of the active site. Catalysis depends on charge relay system residues D210 and H238.

Belongs to the AB hydrolase superfamily. Methylesterase family.

The catalysed reaction is methyl (indol-3-yl)acetate + H2O = (indol-3-yl)acetate + methanol + H(+). It catalyses the reaction methyl salicylate + H2O = salicylate + methanol + H(+). It functions in the pathway plant hormone biosynthesis. With respect to regulation, esterase activity is down-regulated by salicylic acid (SA). In terms of biological role, methylesterase shown to have carboxylesterase activity, methyl indole-3-acetic acid (MeIAA) esterase activity and methyl salicylate (MeSA) esterase activity in vitro. Required to convert methyl salicylate (MeSA) to salicylic acid (SA) as part of the signal transduction pathways that activate systemic acquired resistance in systemic tissue. MeSA is believed to be an inactive form that needs to be demethylated to exert a biological effect. This chain is Methylesterase 7, found in Arabidopsis thaliana (Mouse-ear cress).